The primary structure comprises 350 residues: Heat-inducible transcription repressor HrcA (350 aa).

The protein belongs to the HrcA family.

Negative regulator of class I heat shock genes (grpE-dnaK-dnaJ and groELS operons). Prevents heat-shock induction of these operons. This chain is Heat-inducible transcription repressor HrcA, found in Xanthomonas euvesicatoria pv. vesicatoria (strain 85-10) (Xanthomonas campestris pv. vesicatoria).